A 428-amino-acid chain; its full sequence is Putative zinc metalloprotease SA1105 (428 aa).

His21 lines the Zn(2+) pocket. Glu22 is a catalytic residue. Residue His25 coordinates Zn(2+). 4 helical membrane passes run 172 to 194, 309 to 331, 352 to 374, and 401 to 420; these read FLTL…IGLA, GSTL…GFSF, IISL…LIPI, and TTII…LVTW. Residues 186–269 form the PDZ domain; sequence ALVLFIGLAY…TKSVELTPKK (84 aa).

It belongs to the peptidase M50B family. Zn(2+) serves as cofactor.

Its subcellular location is the cell membrane. The polypeptide is Putative zinc metalloprotease SA1105 (Staphylococcus aureus (strain N315)).